The primary structure comprises 756 residues: Deoxynucleotidyltransferase terminal-interacting protein 2 (756 aa).

A disordered region spans residues 1 to 99 (MVVTRSARAK…AESNYSVSEH (99 aa)). A compositionally biased stretch (low complexity) spans 9–21 (AKASIQAASAESS). Serine 21 carries the post-translational modification Phosphoserine. 2 stretches are compositionally biased toward polar residues: residues 35–55 (PESSTGSDARTTAESQTTGKQ) and 80–96 (EPSTDGETSEAESNYSV). Residue serine 117 is modified to Phosphoserine. Position 129 is a phosphothreonine (threonine 129). Residues serine 141, serine 145, serine 148, serine 184, and serine 194 each carry the phosphoserine modification. The interval 156 to 261 (PTEKTTGARR…LSEINKPNFY (106 aa)) is disordered. The span at 201–211 (RRTRSMQRKLK) shows a compositional bias: basic residues. Glycyl lysine isopeptide (Lys-Gly) (interchain with G-Cter in SUMO2) cross-links involve residues lysine 217 and lysine 220. At threonine 232 the chain carries Phosphothreonine. Phosphoserine occurs at positions 239, 251, and 253. The segment covering 242 to 256 (RQTSHLQARSLSEIN) has biased composition (polar residues). Glycyl lysine isopeptide (Lys-Gly) (interchain with G-Cter in SUMO2) cross-links involve residues lysine 257, lysine 316, and lysine 321. Phosphoserine occurs at positions 324 and 330. A Glycyl lysine isopeptide (Lys-Gly) (interchain with G-Cter in SUMO2) cross-link involves residue lysine 345. Serine 381 carries the post-translational modification Phosphoserine. A Glycyl lysine isopeptide (Lys-Gly) (interchain with G-Cter in SUMO2) cross-link involves residue lysine 384. Phosphoserine occurs at positions 434 and 512. Positions 505–542 (LEEEDKASEVAIEEEKEEEEDEKSEEDSSDHDENEDEF) form a coiled coil. Residues 510-547 (KASEVAIEEEKEEEEDEKSEEDSSDHDENEDEFSDEED) are disordered. The segment at 548-605 (FLNSTKAKLLKLTSSSIDPGLSIKQLGGLYINFNADKLQSNKRTLTQIKEKKKNELLQ) is tdBR region; mediates interaction with DNTT. Lysine 558 participates in a covalent cross-link: Glycyl lysine isopeptide (Lys-Gly) (interchain with G-Cter in SUMO2). Phosphoserine is present on serine 569. Residues lysine 584 and lysine 606 each participate in a glycyl lysine isopeptide (Lys-Gly) (interchain with G-Cter in SUMO2) cross-link. The residue at position 610 (threonine 610) is a Phosphothreonine. Residues lysine 626, lysine 649, lysine 658, lysine 686, and lysine 731 each participate in a glycyl lysine isopeptide (Lys-Gly) (interchain with G-Cter in SUMO2) cross-link.

Forms a ternary complex with DNTT and core histone; interaction with PCNA releases DNTT and H2A/H2B histones from this ternary complex. Interacts with ESR1, ESR2, PPARG and RXRA. Part of the small subunit (SSU) processome, composed of more than 70 proteins and the RNA chaperone small nucleolar RNA (snoRNA) U3. Widely expressed with higher levels in testis.

The protein localises to the nucleus. Its subcellular location is the nucleolus. In terms of biological role, regulates the transcriptional activity of DNTT and ESR1. May function as a chromatin remodeling protein. Part of the small subunit (SSU) processome, first precursor of the small eukaryotic ribosomal subunit. During the assembly of the SSU processome in the nucleolus, many ribosome biogenesis factors, an RNA chaperone and ribosomal proteins associate with the nascent pre-rRNA and work in concert to generate RNA folding, modifications, rearrangements and cleavage as well as targeted degradation of pre-ribosomal RNA by the RNA exosome. In Homo sapiens (Human), this protein is Deoxynucleotidyltransferase terminal-interacting protein 2.